Reading from the N-terminus, the 1052-residue chain is MYFLHGTPQRIQLSSRAIQICRIPKVSFFVVLTETEILIYQIRPLTLISKITKSQNLFERHGKNKKIAVNSEYGIIAVATEKNYVAVYHFTLNASKPVLTPSPYLTRYDDGPGEIFGPIKCEIQYKLAMRYGGGLKCLEIQRDSIVYAADSAPIIQVSTLETTDPNKLWKVSSKQYDLREVTWFLDHSSLISRLYFDVKIDTFFWMSTDGRVYANIGVSSNTNTKSLFGLCVHNPVDLNKSDNDKDINEDLESKLREKKATVLSTNARFSLLYVGTADGTVYAYEIRDFGRQYVQTHSFKYSASSGKVNHIATTGDGHQVMVGYDDGWATLSPYLNLCCASSETEYFNFGLSCGFWDRDSSSFYGLGSKNFSSTGEAEGTGLSTPIIAESLKENDEFFAMEKENVDIQYLSQNDNTNDVLYSITDSKQFISTIYILPFLKSTIVSSVQSTLQVCGAQTSDRLYISKSYEFCSSVKNNFGIDFWDQVEYPQPYVASEWPIRYVSIKDDGSLIAIAGLHGLAIYVCSKKTWFLYKDANMEQLISVTCPMIWCSQFLLAGVVCESNFELHLYKAKGPLDDRENLAKLSFTSTIVTMSVCDEYSLVVYTADNFLHHIRFDINELGRLELDYLTSVNFAPIFTTPSRVRSITLLLPKDLANIQPSDLLFYAVLLVLINGKLVLLSLKKQHSKELLYQCSMLAGDVEFYFINGSQEIPSLFHSIWIMTGKGLKLWLSFSEILSSVLINTKNLIDGLPKFLNTSKRVSLENFHRLSVEDLRSPSFVYKNGVDCNFDNTHLAKLIKNVNISEKFQKECIDLESQGCLLTVLSNYGLLLTAYTQGHKNLVNKMEYAHIQIGVYPFLPEIVRALLLLDKREQAIDLVKTYGHLHYINFVLEKLLSSSLLTYNSSQRDKLLYEVSLLFKDLQEFTTFKIVLGCLRKTEAEYWPMIFKYFGEPKDLMKKCLETEDVKSAAECLIIWQIHQGSASCASTFLSIYEMALKIKNWDVCTELSSYLVSLDPEKRLLKTALELLDEGPDSKDIRLYDQFNNLMKEVDKY.

Position 293 is a phosphotyrosine (Tyr-293). Residues 661-681 (DLLFYAVLLVLINGKLVLLSL) traverse the membrane as a helical segment.

The protein belongs to the RIC1 family. Component of a guanine nucleotide exchange factor (GEF) complex.

It localises to the golgi apparatus membrane. Functionally, probable component of a guanine nucleotide exchange factor (GEF) that may be required for efficient fusion of endosome-derived vesicles with the Golgi. The protein is Guanine nucleotide exchange factor subunit ric1 (ric1) of Schizosaccharomyces pombe (strain 972 / ATCC 24843) (Fission yeast).